The chain runs to 439 residues: Glutamate--tRNA ligase 2 (439 aa).

The 'HIGH' region signature appears at 9–19; it reads PSPTGHLHVGN. Residues 233–237 carry the 'KMSKS' region motif; the sequence is KLSKR. Lysine 236 contacts ATP.

Belongs to the class-I aminoacyl-tRNA synthetase family. Glutamate--tRNA ligase type 1 subfamily. Monomer.

The protein resides in the cytoplasm. It carries out the reaction tRNA(Glu) + L-glutamate + ATP = L-glutamyl-tRNA(Glu) + AMP + diphosphate. Its function is as follows. Catalyzes the attachment of glutamate to tRNA(Glu) in a two-step reaction: glutamate is first activated by ATP to form Glu-AMP and then transferred to the acceptor end of tRNA(Glu). The sequence is that of Glutamate--tRNA ligase 2 from Sphingopyxis alaskensis (strain DSM 13593 / LMG 18877 / RB2256) (Sphingomonas alaskensis).